A 282-amino-acid chain; its full sequence is Putative 4-diphosphocytidyl-2-C-methyl-D-erythritol kinase (282 aa).

Lys-9 is an active-site residue. Residue 93-103 (PVSAGLAGGSA) participates in ATP binding. Residue Asp-135 is part of the active site.

The protein belongs to the GHMP kinase family. IspE subfamily.

It carries out the reaction 4-CDP-2-C-methyl-D-erythritol + ATP = 4-CDP-2-C-methyl-D-erythritol 2-phosphate + ADP + H(+). Catalyzes the phosphorylation of the position 2 hydroxy group of 4-diphosphocytidyl-2C-methyl-D-erythritol. This is Putative 4-diphosphocytidyl-2-C-methyl-D-erythritol kinase from Staphylococcus aureus (strain MSSA476).